Here is a 62-residue protein sequence, read N- to C-terminus: Large ribosomal subunit protein bL32 (62 aa).

It belongs to the bacterial ribosomal protein bL32 family.

The chain is Large ribosomal subunit protein bL32 from Levilactobacillus brevis (strain ATCC 367 / BCRC 12310 / CIP 105137 / JCM 1170 / LMG 11437 / NCIMB 947 / NCTC 947) (Lactobacillus brevis).